The chain runs to 210 residues: Large ribosomal subunit protein uL3 (210 aa).

The tract at residues 133–152 is disordered; it reads ATHGNSLSHRVHGSTGQNQT. Residue Q151 is modified to N5-methylglutamine.

Belongs to the universal ribosomal protein uL3 family. As to quaternary structure, part of the 50S ribosomal subunit. Forms a cluster with proteins L14 and L19. In terms of processing, methylated by PrmB.

Its function is as follows. One of the primary rRNA binding proteins, it binds directly near the 3'-end of the 23S rRNA, where it nucleates assembly of the 50S subunit. The chain is Large ribosomal subunit protein uL3 from Francisella philomiragia subsp. philomiragia (strain ATCC 25017 / CCUG 19701 / FSC 153 / O#319-036).